Reading from the N-terminus, the 163-residue chain is Putative 4-hydroxy-4-methyl-2-oxoglutarate aldolase (163 aa).

Substrate-binding positions include 79-82 (GDQL) and R101. D102 contributes to the a divalent metal cation binding site.

The protein belongs to the class II aldolase/RraA-like family. In terms of assembly, homotrimer. A divalent metal cation serves as cofactor.

It carries out the reaction 4-hydroxy-4-methyl-2-oxoglutarate = 2 pyruvate. It catalyses the reaction oxaloacetate + H(+) = pyruvate + CO2. Its function is as follows. Catalyzes the aldol cleavage of 4-hydroxy-4-methyl-2-oxoglutarate (HMG) into 2 molecules of pyruvate. Also contains a secondary oxaloacetate (OAA) decarboxylase activity due to the common pyruvate enolate transition state formed following C-C bond cleavage in the retro-aldol and decarboxylation reactions. In Dechloromonas aromatica (strain RCB), this protein is Putative 4-hydroxy-4-methyl-2-oxoglutarate aldolase.